Here is a 113-residue protein sequence, read N- to C-terminus: Hydrogenase maturation factor HypA (113 aa).

His-2 serves as a coordination point for Ni(2+). Zn(2+) contacts are provided by Cys-73, Cys-76, Cys-89, and Cys-92.

This sequence belongs to the HypA/HybF family.

In terms of biological role, involved in the maturation of [NiFe] hydrogenases. Required for nickel insertion into the metal center of the hydrogenase. This Bradyrhizobium sp. (strain ORS 278) protein is Hydrogenase maturation factor HypA.